A 127-amino-acid polypeptide reads, in one-letter code: Major sperm protein 49 (127 aa).

Position 2 is an N-acetylalanine (alanine 2). The 118-residue stretch at aspartate 9–asparagine 126 folds into the MSP domain.

Sperm.

Its subcellular location is the cell projection. The protein resides in the pseudopodium. It is found in the cytoplasm. It localises to the cytoskeleton. Functionally, central component in molecular interactions underlying sperm crawling. Forms an extensive filament system that extends from sperm villipoda, along the leading edge of the pseudopod. This chain is Major sperm protein 49 (msp-49), found in Caenorhabditis elegans.